The sequence spans 475 residues: Na(+)/H(+) antiporter NhaA 2 (475 aa).

A run of 12 helical transmembrane segments spans residues 44-64 (AQAT…WWAN), 92-112 (LKHI…GLEI), 130-150 (LILC…LFNW), 156-176 (IGWG…LTLV), 186-206 (AFLV…IALF), 211-231 (ISVI…IANY), 232-252 (AGVL…WTML), 255-275 (GVHP…RPML), 331-351 (ALDL…NAGV), 368-388 (LGIV…ACWL), 406-426 (VIGM…IATL), and 442-462 (ILFA…IIAA).

It belongs to the NhaA Na(+)/H(+) (TC 2.A.33) antiporter family.

It localises to the cell inner membrane. It carries out the reaction Na(+)(in) + 2 H(+)(out) = Na(+)(out) + 2 H(+)(in). Its function is as follows. Na(+)/H(+) antiporter that extrudes sodium in exchange for external protons. The chain is Na(+)/H(+) antiporter NhaA 2 from Psychromonas ingrahamii (strain DSM 17664 / CCUG 51855 / 37).